Here is an 83-residue protein sequence, read N- to C-terminus: Exodeoxyribonuclease 7 small subunit (83 aa).

Belongs to the XseB family. As to quaternary structure, heterooligomer composed of large and small subunits.

The protein resides in the cytoplasm. It catalyses the reaction Exonucleolytic cleavage in either 5'- to 3'- or 3'- to 5'-direction to yield nucleoside 5'-phosphates.. Its function is as follows. Bidirectionally degrades single-stranded DNA into large acid-insoluble oligonucleotides, which are then degraded further into small acid-soluble oligonucleotides. This is Exodeoxyribonuclease 7 small subunit from Rhodopseudomonas palustris (strain BisB5).